Reading from the N-terminus, the 231-residue chain is uncharacterized protein (231 aa).

10-34 (VVTGAGSGIGEAIATLLHEEGAKVV) is an NADP(+) binding site. Substrate is bound at residue Ser-140. Catalysis depends on Tyr-153, which acts as the Proton acceptor.

This sequence belongs to the short-chain dehydrogenases/reductases (SDR) family.

This is an uncharacterized protein from Staphylococcus aureus (strain MW2).